The following is a 387-amino-acid chain: Succinate--CoA ligase [ADP-forming] subunit beta (387 aa).

In terms of domain architecture, ATP-grasp spans 9 to 236 (KELFAKHNVP…RAATDPLELK (228 aa)). ATP-binding positions include Lys45, 52–54 (GRG), Ser94, and Glu99. Residues Asn191 and Asp205 each contribute to the Mg(2+) site. Residues Asn256 and 318–320 (GIT) each bind substrate.

It belongs to the succinate/malate CoA ligase beta subunit family. In terms of assembly, heterotetramer of two alpha and two beta subunits. It depends on Mg(2+) as a cofactor.

The catalysed reaction is succinate + ATP + CoA = succinyl-CoA + ADP + phosphate. It carries out the reaction GTP + succinate + CoA = succinyl-CoA + GDP + phosphate. It functions in the pathway carbohydrate metabolism; tricarboxylic acid cycle; succinate from succinyl-CoA (ligase route): step 1/1. Functionally, succinyl-CoA synthetase functions in the citric acid cycle (TCA), coupling the hydrolysis of succinyl-CoA to the synthesis of either ATP or GTP and thus represents the only step of substrate-level phosphorylation in the TCA. The beta subunit provides nucleotide specificity of the enzyme and binds the substrate succinate, while the binding sites for coenzyme A and phosphate are found in the alpha subunit. The chain is Succinate--CoA ligase [ADP-forming] subunit beta from Mycobacterium marinum (strain ATCC BAA-535 / M).